Here is a 230-residue protein sequence, read N- to C-terminus: Somatolactin (230 aa).

A signal peptide spans 1–23; it reads MNMMTVKQGVWAALLWPYLLAAS. 3 cysteine pairs are disulfide-bonded: cysteine 28–cysteine 38, cysteine 88–cysteine 204, and cysteine 221–cysteine 229. N-linked (GlcNAc...) asparagine glycosylation is found at asparagine 137 and asparagine 144.

It belongs to the somatotropin/prolactin family.

The protein localises to the secreted. This chain is Somatolactin, found in Hippoglossus hippoglossus (Atlantic halibut).